The sequence spans 328 residues: L-lactate dehydrogenase (328 aa).

NAD(+) contacts are provided by residues Val-18, Glu-39, Lys-46, Tyr-71, and Gly-85 to Ala-86. 2 residues coordinate substrate: Gln-88 and Arg-94. NAD(+) contacts are provided by residues Ser-107, Ala-124–Asn-126, and Ser-149. Asn-126–Asp-129 serves as a coordination point for substrate. Asp-154 to Arg-157 contributes to the substrate binding site. Beta-D-fructose 1,6-bisphosphate-binding residues include Arg-159 and His-174. His-181 acts as the Proton acceptor in catalysis. At Tyr-226 the chain carries Phosphotyrosine. Residue Thr-235 coordinates substrate.

The protein belongs to the LDH/MDH superfamily. LDH family. In terms of assembly, homotetramer.

Its subcellular location is the cytoplasm. It carries out the reaction (S)-lactate + NAD(+) = pyruvate + NADH + H(+). It participates in fermentation; pyruvate fermentation to lactate; (S)-lactate from pyruvate: step 1/1. Its activity is regulated as follows. Allosterically activated by fructose 1,6-bisphosphate (FBP). Catalyzes the conversion of lactate to pyruvate. The protein is L-lactate dehydrogenase of Streptococcus pneumoniae (strain ATCC BAA-255 / R6).